Consider the following 187-residue polypeptide: UPF0301 protein YqgE (187 aa).

This sequence belongs to the UPF0301 (AlgH) family.

The chain is UPF0301 protein YqgE from Salmonella paratyphi A (strain ATCC 9150 / SARB42).